The primary structure comprises 151 residues: Large ribosomal subunit protein bL9 (151 aa).

It belongs to the bacterial ribosomal protein bL9 family.

In terms of biological role, binds to the 23S rRNA. The chain is Large ribosomal subunit protein bL9 from Prochlorococcus marinus (strain MIT 9301).